The primary structure comprises 240 residues: tRNA (guanine-N(1)-)-methyltransferase (240 aa).

Residues G110 and 130-135 (VGDYVL) contribute to the S-adenosyl-L-methionine site.

This sequence belongs to the RNA methyltransferase TrmD family. In terms of assembly, homodimer.

The protein localises to the cytoplasm. It catalyses the reaction guanosine(37) in tRNA + S-adenosyl-L-methionine = N(1)-methylguanosine(37) in tRNA + S-adenosyl-L-homocysteine + H(+). Functionally, specifically methylates guanosine-37 in various tRNAs. The protein is tRNA (guanine-N(1)-)-methyltransferase of Borrelia recurrentis (strain A1).